Reading from the N-terminus, the 522-residue chain is Vicilin-like seed storage protein At4g36700 (522 aa).

The N-terminal stretch at 1-25 (MTRFAVLPLSVLLLVLLFLCTESLA) is a signal peptide. Asn206, Asn303, Asn341, Asn374, and Asn414 each carry an N-linked (GlcNAc...) asparagine glycan. Residues 265–421 (FNVFESEPDF…SLNVSSVTID (157 aa)) form the Cupin type-1 domain. A disordered region spans residues 457 to 522 (DERKRRHDER…EWEMEGEEES (66 aa)). Composition is skewed to basic and acidic residues over residues 466–491 (RKKE…EKKR) and 501–515 (EELR…KEWE).

Belongs to the 7S seed storage protein family.

Functionally, seed storage protein. This is Vicilin-like seed storage protein At4g36700 from Arabidopsis thaliana (Mouse-ear cress).